The following is a 406-amino-acid chain: Tyrosine--tRNA ligase (406 aa).

Y35 contributes to the L-tyrosine binding site. The 'HIGH' region motif lies at 40–49 (ATSASLHIGH). Residues Y167 and Q171 each contribute to the L-tyrosine site. Residues 227 to 231 (KMGKS) carry the 'KMSKS' region motif. Position 230 (K230) interacts with ATP. Residues 341-405 (ILLVDLMVLA…IGKKKILRIV (65 aa)) enclose the S4 RNA-binding domain.

The protein belongs to the class-I aminoacyl-tRNA synthetase family. TyrS type 1 subfamily. In terms of assembly, homodimer.

Its subcellular location is the cytoplasm. It catalyses the reaction tRNA(Tyr) + L-tyrosine + ATP = L-tyrosyl-tRNA(Tyr) + AMP + diphosphate + H(+). Functionally, catalyzes the attachment of tyrosine to tRNA(Tyr) in a two-step reaction: tyrosine is first activated by ATP to form Tyr-AMP and then transferred to the acceptor end of tRNA(Tyr). The sequence is that of Tyrosine--tRNA ligase from Borrelia duttonii (strain Ly).